The chain runs to 400 residues: S-adenosylmethionine synthase (400 aa).

H15 provides a ligand contact to ATP. A Mg(2+)-binding site is contributed by D17. E43 is a binding site for K(+). Positions 56 and 99 each coordinate L-methionine. The interval 99 to 109 is flexible loop; it reads QSLEIGAGVDT. ATP-binding positions include 174-176, D254, 260-261, A277, and K281; these read DGK and RK. D254 is an L-methionine binding site. L-methionine is bound at residue K285.

Belongs to the AdoMet synthase family. In terms of assembly, homotetramer; dimer of dimers. Mg(2+) is required as a cofactor. The cofactor is K(+).

It is found in the cytoplasm. It catalyses the reaction L-methionine + ATP + H2O = S-adenosyl-L-methionine + phosphate + diphosphate. It participates in amino-acid biosynthesis; S-adenosyl-L-methionine biosynthesis; S-adenosyl-L-methionine from L-methionine: step 1/1. Its function is as follows. Catalyzes the formation of S-adenosylmethionine (AdoMet) from methionine and ATP. The overall synthetic reaction is composed of two sequential steps, AdoMet formation and the subsequent tripolyphosphate hydrolysis which occurs prior to release of AdoMet from the enzyme. This is S-adenosylmethionine synthase from Corynebacterium kroppenstedtii (strain DSM 44385 / JCM 11950 / CIP 105744 / CCUG 35717).